Here is a 189-residue protein sequence, read N- to C-terminus: WASH complex subunit homolog 3 (189 aa).

Residues 35-74 (MTEMLNNFGNKMEDILEKAEQSLDTADRKLRLMESKLAGM) adopt a coiled-coil conformation. Disordered regions lie at residues 76-101 (LEDK…NPSS) and 150-189 (SEGV…SDSD). Residues 150–165 (SEGVDPSILKRGDEPS) show a composition bias toward basic and acidic residues. Polar residues predominate over residues 167–189 (PQAQTSRNYESSGESTASFSDSD). A Phosphothreonine modification is found at Thr182.

This sequence belongs to the CCDC53 family. As to quaternary structure, probable component of the WASH complex. Component of the DHIC (ddl-1-containing hsf-1 inhibitory complex), which contains at least ddl-1, ddl-2, hsb-1 and hsf-1. Within the complex, interacts with ddl-2. Within the complex, interacts with hsb-1. Within the complex, interacts with hsf-1. Formation of the DHIC may be dependent upon the Insulin/IGF-1-like signaling (IIS) mediated pathway. Phosphorylated. Phosphorylation on Thr-182 may promote DHIC complex dissociation and consequently the activation of heat-shock transcription factor hsf-1. Phosphorylation is modulated by the Insulin/IGF-1-like signaling (IIS) mediated pathway. As to expression, expressed in pharynx, intestine, body wall muscles, vulva muscles, spermatheca, and several head and tail neurons.

Its function is as follows. Acts as a component of the WASH core complex that functions as a nucleation-promoting factor (NPF) at the surface of endosomes, where it recruits and activates the Arp2/3 complex to induce actin polymerization, playing a key role in the fission of tubules that serve as transport intermediates during endosome sorting. Acts as a component of the DHIC (ddl-1-containing hsf-1 inhibitory complex) which modulates lifespan by sequestering the heat-shock transcription factor hsf-1 to negatively regulate its binding to DNA and its transcriptional activity. This chain is WASH complex subunit homolog 3 (ddl-1), found in Caenorhabditis elegans.